Reading from the N-terminus, the 703-residue chain is ABC transporter G family member 11 (703 aa).

Residues 50-293 form the ABC transporter domain; that stretch reads LTWQDLTVMV…FAQAGFPCPA (244 aa). 87-94 is an ATP binding site; that stretch reads GPSGSGKS. The 213-residue stretch at 382–594 folds into the ABC transmembrane type-2 domain; that stretch reads LQTYTLTKRS…ALQGQYQNDL (213 aa). Asn-394 is a glycosylation site (N-linked (GlcNAc...) asparagine). 6 consecutive transmembrane segments (helical) span residues 406 to 426, 436 to 456, 485 to 505, 513 to 533, 540 to 560, and 628 to 648; these read LLIYILVTVCIGTIYLNVGTS, CASFVFGFVTFMSIGGFPSFV, TPFLIMITFISGTICYFMVGL, LFFVLCLYASVTVVESLMMAI, FLMGIIIGAGIQGIFMLVSGF, and INLSVILSMIIIYRIIFFIMI. 2 N-linked (GlcNAc...) asparagine glycosylation sites follow: Asn-671 and Asn-675. Ser-688 bears the Phosphoserine mark.

The protein belongs to the ABC transporter superfamily. ABCG family. Eye pigment precursor importer (TC 3.A.1.204) subfamily. Homodimer. Forms heterodimers with ABCG9, ABCG12 and ABCG14 in epidermal cells. In terms of tissue distribution, expressed in seedlings, roots, stems, leaves, flowers, and siliques, mostly in epidermis, trichomes, vasculatures and developing tissues. Follows an uniparental maternal expression in the seed, thus being the product of a maternally expressed imprinted gene. Accumulates in the phloem. Transcripts seem to be transported from shoots to roots.

The protein localises to the cell membrane. In terms of biological role, required for the cuticle, root suberin and pollen coat development by controlling cutin and maybe wax transport to the extracellular matrix. Involved in developmental plasticity and stress responses. Together with ABCG9 and ABCG14, required for vascular development by regulating lipid/sterol homeostasis. May be a transporter of lignin precursors during tracheary element differentiation. The protein is ABC transporter G family member 11 of Arabidopsis thaliana (Mouse-ear cress).